We begin with the raw amino-acid sequence, 179 residues long: Large ribosomal subunit protein uL5 (179 aa).

It belongs to the universal ribosomal protein uL5 family. Part of the 50S ribosomal subunit; part of the 5S rRNA/L5/L18/L25 subcomplex. Contacts the 5S rRNA and the P site tRNA. Forms a bridge to the 30S subunit in the 70S ribosome.

This is one of the proteins that bind and probably mediate the attachment of the 5S RNA into the large ribosomal subunit, where it forms part of the central protuberance. In the 70S ribosome it contacts protein S13 of the 30S subunit (bridge B1b), connecting the 2 subunits; this bridge is implicated in subunit movement. Contacts the P site tRNA; the 5S rRNA and some of its associated proteins might help stabilize positioning of ribosome-bound tRNAs. The sequence is that of Large ribosomal subunit protein uL5 from Azotobacter vinelandii (strain DJ / ATCC BAA-1303).